The chain runs to 323 residues: Viral cathepsin (323 aa).

The first 16 residues, 1-16, serve as a signal peptide directing secretion; sequence MNKILFYLFVYGVVNS. Residues 17 to 112 constitute a propeptide, activation peptide; the sequence is AAYDLLKAPN…IVLDQPPGKG (96 aa). 3 disulfide bridges follow: cysteine 133–cysteine 174, cysteine 167–cysteine 207, and cysteine 262–cysteine 310. Residue cysteine 136 is part of the active site. An N-linked (GlcNAc...) asparagine; by host glycan is attached at asparagine 158. Residues histidine 269 and asparagine 289 contribute to the active site.

Belongs to the peptidase C1 family. Post-translationally, synthesized as an inactive proenzyme and activated by proteolytic removal of the inhibitory propeptide.

It carries out the reaction Endopeptidase of broad specificity, hydrolyzing substrates of both cathepsin L and cathepsin B.. Functionally, cysteine protease that plays an essential role in host liquefaction to facilitate horizontal transmission of the virus. May participate in the degradation of foreign protein expressed by the baculovirus system. In Helicoverpa zea (Corn earworm moth), this protein is Viral cathepsin (VCATH).